Here is a 276-residue protein sequence, read N- to C-terminus: 2-dehydro-3-deoxyphosphooctonate aldolase (276 aa).

The protein belongs to the KdsA family.

It localises to the cytoplasm. It carries out the reaction D-arabinose 5-phosphate + phosphoenolpyruvate + H2O = 3-deoxy-alpha-D-manno-2-octulosonate-8-phosphate + phosphate. The protein operates within carbohydrate biosynthesis; 3-deoxy-D-manno-octulosonate biosynthesis; 3-deoxy-D-manno-octulosonate from D-ribulose 5-phosphate: step 2/3. Its pathway is bacterial outer membrane biogenesis; lipopolysaccharide biosynthesis. In Xylella fastidiosa (strain M23), this protein is 2-dehydro-3-deoxyphosphooctonate aldolase.